Here is a 372-residue protein sequence, read N- to C-terminus: MSNKDIRVVVGMSGGVDSSVTAHVLKEQGYDVIGIFMKNWDDTDENGVCTATEDYNDVIEVCNQIGIPYYAVNFEKEYWDKVFTYFLDEYKKGRTPNPDVMCNKEIKFKAFLDHAMNLGADYVATGHYARIHRHEDGHVEMLRGVDNNKDQTYFLNQLSQQQLSKVMFPIGDIEKSEVRRIAEEQGLVTAKKKDSTGICFIGEKNFKTFLSQYLPAQPGDMITLDGKKMGKHSGLMYYTIGQRHGLGIGGDGDPWFVVGKNLKDNVLYVEQGFHHDALYSDYLIASDYSFVNPEDNDLDQGFECTAKFRYRQKDTKVFVKRENDHALRVTFAEPVRAITPGQAVVFYQGDVCLGGATIDDVFKNEGQLNYVV.

ATP is bound by residues 11 to 18 (GMSGGVDS) and methionine 37. An interaction with target base in tRNA region spans residues 97–99 (NPD). The active-site Nucleophile is cysteine 102. A disulfide bridge connects residues cysteine 102 and cysteine 199. Residue glycine 126 coordinates ATP. The interaction with tRNA stretch occupies residues 149 to 151 (KDQ). The active-site Cysteine persulfide intermediate is the cysteine 199. An interaction with tRNA region spans residues 309–310 (RY).

Belongs to the MnmA/TRMU family.

It localises to the cytoplasm. The enzyme catalyses S-sulfanyl-L-cysteinyl-[protein] + uridine(34) in tRNA + AH2 + ATP = 2-thiouridine(34) in tRNA + L-cysteinyl-[protein] + A + AMP + diphosphate + H(+). In terms of biological role, catalyzes the 2-thiolation of uridine at the wobble position (U34) of tRNA, leading to the formation of s(2)U34. This chain is tRNA-specific 2-thiouridylase MnmA, found in Staphylococcus aureus (strain USA300).